A 428-amino-acid chain; its full sequence is C4-dicarboxylate transport protein (428 aa).

Transmembrane regions (helical) follow at residues 8-28 (SLYVQVLTAIAIGILLGHFYP), 44-64 (LIKMVIAPVIFCTVVTGIAGM), 76-96 (VALLYFEVVSTIALIIGLIIV), 142-162 (IGAFASGNILQVLLFAVLFGF), 184-204 (VIFGIINMIMRLAPIGAFGAM), 222-242 (LIICFYITCILFVVVVLGSIA), 289-309 (VVGLVIPTGYSFNLDGTSIYL), 326-346 (IFHQITLLVVLLLSSKGAAGV), and 352-372 (IVLAATISAVGHLPVAGLALI).

Belongs to the dicarboxylate/amino acid:cation symporter (DAACS) (TC 2.A.23) family.

It is found in the cell inner membrane. Functionally, responsible for the transport of dicarboxylates such as succinate, fumarate, and malate from the periplasm across the membrane. This is C4-dicarboxylate transport protein from Klebsiella pneumoniae subsp. pneumoniae (strain ATCC 700721 / MGH 78578).